The primary structure comprises 718 residues: Centromere/kinetochore protein zw10 (718 aa).

The protein belongs to the ZW10 family.

The protein localises to the cytoplasm. Its subcellular location is the nucleus. It is found in the chromosome. It localises to the centromere. The protein resides in the kinetochore. In terms of biological role, required for accurate chromosome segregation. In Drosophila pseudoobscura pseudoobscura (Fruit fly), this protein is Centromere/kinetochore protein zw10 (mit(1)15).